A 433-amino-acid polypeptide reads, in one-letter code: MGKNKNYNKNQFKKSKTNNDTTVAQQQQTIEEKPDFKIDGSILEGGGQILRNSVALASLFNKAISIEKIRYNRDQPGLKNQHKAGIDLMSRLFKAHLTGCSVGSCKLYYQPTQKTIQDDGVIEADTKTAGSICLMIQVSLPCLIFAPHSTKMVLGGGTNCDFAPAADYIQNVFLPIATTMGFKCEMSIDKRGFYPKGGGAVTLTTQPLTQPLSPITIVNKGEVNRIVIKSYFTSPRISPLVAERMNNTAKKLIKKDFKKVDVETELIDVSKFSFGDGTFIEIRAYTDQGCIFGATGNGAIGVPAEKVAEDAANSLLKDLQDGGCMDEYLQDQLIIFMALAKGKSQIKTGPISLHTQTSIHITSLMTGAIFTITPLTNNTQSGEETNLITCEGISYFPSDLNNNNNNSNSNTTTTTTTTTISTTTIDNQNSEEK.

Residues 1–10 show a composition bias toward low complexity; sequence MGKNKNYNKN. Residues 1 to 28 form a disordered region; it reads MGKNKNYNKNQFKKSKTNNDTTVAQQQQ. Positions 18 to 28 are enriched in polar residues; that stretch reads NNDTTVAQQQQ. Residues glutamine 137 and 328–332 each bind ATP; that span reads YLQDQ. Residue histidine 354 is the Tele-AMP-histidine intermediate of the active site. The tract at residues 400–433 is disordered; sequence LNNNNNNSNSNTTTTTTTTTISTTTIDNQNSEEK. The segment covering 401 to 425 has biased composition (low complexity); sequence NNNNNNSNSNTTTTTTTTTISTTTI.

It belongs to the RNA 3'-terminal cyclase family. Type 1 subfamily.

The protein resides in the nucleus. It is found in the nucleoplasm. It carries out the reaction a 3'-end 3'-phospho-ribonucleotide-RNA + ATP = a 3'-end 2',3'-cyclophospho-ribonucleotide-RNA + AMP + diphosphate. In terms of biological role, catalyzes the conversion of 3'-phosphate to a 2',3'-cyclic phosphodiester at the end of RNA. The mechanism of action of the enzyme occurs in 3 steps: (A) adenylation of the enzyme by ATP; (B) transfer of adenylate to an RNA-N3'P to produce RNA-N3'PP5'A; (C) and attack of the adjacent 2'-hydroxyl on the 3'-phosphorus in the diester linkage to produce the cyclic end product. The biological role of this enzyme is unknown but it is likely to function in some aspects of cellular RNA processing. The chain is Probable RNA 3'-terminal phosphate cyclase (rtca) from Dictyostelium discoideum (Social amoeba).